The sequence spans 168 residues: Small ribosomal subunit protein uS5c (168 aa).

The S5 DRBM domain maps to W17–V80.

This sequence belongs to the universal ribosomal protein uS5 family. As to quaternary structure, part of the 30S ribosomal subunit. Contacts protein S4.

It is found in the plastid. Its subcellular location is the chloroplast. Functionally, with S4 and S12 plays an important role in translational accuracy. The chain is Small ribosomal subunit protein uS5c (rps5) from Rhodomonas salina (Cryptomonas salina).